Consider the following 481-residue polypeptide: O-phosphoseryl-tRNA(Sec) selenium transferase (481 aa).

A tetramerization region spans residues 1–36 (MKANFGKKEGEYSRLVSKSSNKLLNSLWEKKQIPEE). Arg69 provides a ligand contact to pyridoxal 5'-phosphate. Residues 90–100 (GRSGNLLEIQP) are phosphate loop (P-loop). Substrate is bound by residues Arg91, Ser92, and Gln99. Lys277 carries the N6-(pyridoxal phosphate)lysine modification. Arg306 contributes to the substrate binding site.

This sequence belongs to the SepSecS family. Homotetramer formed by a catalytic dimer and a non-catalytic dimer serving as a binding platform that orients tRNASec for catalysis. Each tetramer binds the CCA ends of two tRNAs which point to the active sites of the catalytic dimer. Requires pyridoxal 5'-phosphate as cofactor.

It localises to the cytoplasm. The catalysed reaction is O-phospho-L-seryl-tRNA(Sec) + selenophosphate + H2O = L-selenocysteinyl-tRNA(Sec) + 2 phosphate. The protein operates within aminoacyl-tRNA biosynthesis; selenocysteinyl-tRNA(Sec) biosynthesis; selenocysteinyl-tRNA(Sec) from L-seryl-tRNA(Sec) (archaeal/eukaryal route): step 2/2. Functionally, converts O-phosphoseryl-tRNA(Sec) to selenocysteinyl-tRNA(Sec) required for selenoprotein biosynthesis. This is O-phosphoseryl-tRNA(Sec) selenium transferase (secs-1) from Caenorhabditis elegans.